We begin with the raw amino-acid sequence, 193 residues long: Glycerol-3-phosphate acyltransferase (193 aa).

Helical transmembrane passes span 4–24 (LALIMIIIAYLLGSISSAVLI), 56–76 (GLVLLCDILKGMLPVWGGYFL), 80–100 (PLLLGIIAIAACLGHMYPLFF), 116–136 (APIGLDLTGLLFGTWVVIVLI), and 152–174 (PLFTWLVKPQYTLPVAMLSCLIV).

It belongs to the PlsY family. In terms of assembly, probably interacts with PlsX.

It is found in the cell inner membrane. The catalysed reaction is an acyl phosphate + sn-glycerol 3-phosphate = a 1-acyl-sn-glycero-3-phosphate + phosphate. It participates in lipid metabolism; phospholipid metabolism. Its function is as follows. Catalyzes the transfer of an acyl group from acyl-phosphate (acyl-PO(4)) to glycerol-3-phosphate (G3P) to form lysophosphatidic acid (LPA). This enzyme utilizes acyl-phosphate as fatty acyl donor, but not acyl-CoA or acyl-ACP. The chain is Glycerol-3-phosphate acyltransferase from Aliivibrio salmonicida (strain LFI1238) (Vibrio salmonicida (strain LFI1238)).